Here is a 200-residue protein sequence, read N- to C-terminus: Small ribosomal subunit protein uS4 (200 aa).

Residues 22–43 (TGKELERRPYAPGQHGPTQRKK) form a disordered region. In terms of domain architecture, S4 RNA-binding spans 92–170 (QRLDNIVYRL…VPEYVTFDAE (79 aa)).

This sequence belongs to the universal ribosomal protein uS4 family. As to quaternary structure, part of the 30S ribosomal subunit. Contacts protein S5. The interaction surface between S4 and S5 is involved in control of translational fidelity.

In terms of biological role, one of the primary rRNA binding proteins, it binds directly to 16S rRNA where it nucleates assembly of the body of the 30S subunit. Its function is as follows. With S5 and S12 plays an important role in translational accuracy. This Listeria monocytogenes serotype 4b (strain F2365) protein is Small ribosomal subunit protein uS4.